The following is a 393-amino-acid chain: Flavohemoprotein (393 aa).

The Globin domain occupies 1 to 139 (MLSAEHRAIV…LADLLIGLEE (139 aa)). Residue His85 coordinates heme b. Residues Tyr95 and Glu138 each act as charge relay system in the active site. Positions 150–393 (GGWRGTRAFV…EFFGPASALD (244 aa)) are reductase. Positions 153-256 (RGTRAFVVAR…LTPSGDFTLE (104 aa)) constitute an FAD-binding FR-type domain. Residues Tyr191 and 205–208 (RNYS) contribute to the FAD site. 268–273 (GVGITP) serves as a coordination point for NADP(+). 385-388 (FFGP) is an FAD binding site.

It belongs to the globin family. Two-domain flavohemoproteins subfamily. In the C-terminal section; belongs to the flavoprotein pyridine nucleotide cytochrome reductase family. It depends on heme b as a cofactor. FAD serves as cofactor.

The catalysed reaction is 2 nitric oxide + NADPH + 2 O2 = 2 nitrate + NADP(+) + H(+). It carries out the reaction 2 nitric oxide + NADH + 2 O2 = 2 nitrate + NAD(+) + H(+). Is involved in NO detoxification in an aerobic process, termed nitric oxide dioxygenase (NOD) reaction that utilizes O(2) and NAD(P)H to convert NO to nitrate, which protects the bacterium from various noxious nitrogen compounds. Therefore, plays a central role in the inducible response to nitrosative stress. This chain is Flavohemoprotein, found in Burkholderia sp. (strain TH2).